The primary structure comprises 166 residues: NAD(P)H-quinone oxidoreductase subunit I, chloroplastic (166 aa).

2 4Fe-4S ferredoxin-type domains span residues Gly55 to Lys84 and Leu95 to Glu124. 8 residues coordinate [4Fe-4S] cluster: Cys64, Cys67, Cys70, Cys74, Cys104, Cys107, Cys110, and Cys114.

The protein belongs to the complex I 23 kDa subunit family. As to quaternary structure, NDH is composed of at least 16 different subunits, 5 of which are encoded in the nucleus. The cofactor is [4Fe-4S] cluster.

It localises to the plastid. The protein resides in the chloroplast thylakoid membrane. The catalysed reaction is a plastoquinone + NADH + (n+1) H(+)(in) = a plastoquinol + NAD(+) + n H(+)(out). It carries out the reaction a plastoquinone + NADPH + (n+1) H(+)(in) = a plastoquinol + NADP(+) + n H(+)(out). NDH shuttles electrons from NAD(P)H:plastoquinone, via FMN and iron-sulfur (Fe-S) centers, to quinones in the photosynthetic chain and possibly in a chloroplast respiratory chain. The immediate electron acceptor for the enzyme in this species is believed to be plastoquinone. Couples the redox reaction to proton translocation, and thus conserves the redox energy in a proton gradient. In Tridax balbisioides (Coatbuttons), this protein is NAD(P)H-quinone oxidoreductase subunit I, chloroplastic.